A 1132-amino-acid chain; its full sequence is BTB/POZ domain-containing protein 7 (1132 aa).

Residues 1–10 are compositionally biased toward polar residues; the sequence is MGANASNYPH. Residues 1–24 form a disordered region; the sequence is MGANASNYPHSCSPRVGGNSQAQQ. G2 is lipidated: N-myristoyl glycine. 2 BTB domains span residues 142-211 and 247-341; these read TDVD…GMED and YDVV…DLSV. Residues 413–479 enclose the BACK domain; sequence YGSKWVHRQA…WGEHQLMKRI (67 aa). Residue S722 is modified to Phosphoserine. Disordered stretches follow at residues 897–1019 and 1035–1132; these read LSQS…HLHR and QRSD…KSAL. The span at 918–927 shows a compositional bias: basic residues; that stretch reads RHTHTSRKKH. 4 stretches are compositionally biased toward basic and acidic residues: residues 928-939, 1000-1019, 1083-1093, and 1105-1114; these read TLEQKTDTRENP, KKQEEARREYPLSPDGHLHR, PEERSGRRLAD, and TDLEREDSIS. The residue at position 1012 (S1012) is a Phosphoserine.

The protein resides in the nucleus. Functionally, acts as a mediator of epithelial dynamics and organ branching by promoting cleft progression. Induced following accumulation of fibronectin in forming clefts, leading to local expression of the cell-scattering SNAIL2 and suppression of E-cadherin levels, thereby altering cell morphology and reducing cell-cell adhesion. This stimulates cell separation at the base of forming clefts by local, dynamic intercellular gap formation and promotes cleft progression. This Homo sapiens (Human) protein is BTB/POZ domain-containing protein 7 (BTBD7).